Here is a 432-residue protein sequence, read N- to C-terminus: Adenylosuccinate synthetase (432 aa).

Residues 13-19 and 41-43 contribute to the GTP site; these read GDEGKGK and GHT. The Proton acceptor role is filled by D14. D14 and G41 together coordinate Mg(2+). Residues 14 to 17, 39 to 42, T130, R144, Q225, T240, and R304 contribute to the IMP site; these read DEGK and NAGH. H42 acts as the Proton donor in catalysis. 300–306 contributes to the substrate binding site; it reads ATTGRRR. GTP-binding positions include R306, 332 to 334, and 415 to 417; these read KLD and STG.

It belongs to the adenylosuccinate synthetase family. Homodimer. Mg(2+) is required as a cofactor.

It is found in the cytoplasm. It carries out the reaction IMP + L-aspartate + GTP = N(6)-(1,2-dicarboxyethyl)-AMP + GDP + phosphate + 2 H(+). Its pathway is purine metabolism; AMP biosynthesis via de novo pathway; AMP from IMP: step 1/2. Its function is as follows. Plays an important role in the de novo pathway of purine nucleotide biosynthesis. Catalyzes the first committed step in the biosynthesis of AMP from IMP. The chain is Adenylosuccinate synthetase from Salmonella agona (strain SL483).